The sequence spans 303 residues: Flavin-dependent thymidylate synthase (303 aa).

The region spanning 41–258 (GKVALVDTMP…PVACEAFIDY (218 aa)) is the ThyX domain. FAD-binding positions include Ser95, 118–120 (RHR), and Glu126. DUMP contacts are provided by residues 115 to 118 (QWIR), 126 to 130 (EYSAR), and Arg197. The ThyX motif signature appears at 118–128 (RHRTANVNEYS). Residues 213–215 (DLH) and His219 contribute to the FAD site. Arg224 serves as a coordination point for dUMP. The active-site Involved in ionization of N3 of dUMP, leading to its activation is Arg224.

This sequence belongs to the thymidylate synthase ThyX family. Homotetramer. FAD serves as cofactor.

The enzyme catalyses dUMP + (6R)-5,10-methylene-5,6,7,8-tetrahydrofolate + NADPH + H(+) = dTMP + (6S)-5,6,7,8-tetrahydrofolate + NADP(+). It participates in pyrimidine metabolism; dTTP biosynthesis. Functionally, catalyzes the reductive methylation of 2'-deoxyuridine-5'-monophosphate (dUMP) to 2'-deoxythymidine-5'-monophosphate (dTMP) while utilizing 5,10-methylenetetrahydrofolate (mTHF) as the methyl donor, and NADPH and FADH(2) as the reductant. The protein is Flavin-dependent thymidylate synthase (thyA) of Dictyostelium discoideum (Social amoeba).